A 201-amino-acid polypeptide reads, in one-letter code: Pyridoxine/pyridoxamine 5'-phosphate oxidase (201 aa).

Residues 49–54 (RMVLLK), 64–65 (YT), Lys71, and Gln93 each bind FMN. Lys54 provides a ligand contact to substrate. Substrate is bound by residues Tyr111, Arg115, and Ser119. FMN-binding positions include 128 to 129 (QS) and Trp172. Substrate is bound at residue 178 to 180 (RLH). An FMN-binding site is contributed by Arg182.

Belongs to the pyridoxamine 5'-phosphate oxidase family. As to quaternary structure, homodimer. Requires FMN as cofactor.

The enzyme catalyses pyridoxamine 5'-phosphate + O2 + H2O = pyridoxal 5'-phosphate + H2O2 + NH4(+). It catalyses the reaction pyridoxine 5'-phosphate + O2 = pyridoxal 5'-phosphate + H2O2. It participates in cofactor metabolism; pyridoxal 5'-phosphate salvage; pyridoxal 5'-phosphate from pyridoxamine 5'-phosphate: step 1/1. Its pathway is cofactor metabolism; pyridoxal 5'-phosphate salvage; pyridoxal 5'-phosphate from pyridoxine 5'-phosphate: step 1/1. Catalyzes the oxidation of either pyridoxine 5'-phosphate (PNP) or pyridoxamine 5'-phosphate (PMP) into pyridoxal 5'-phosphate (PLP). The chain is Pyridoxine/pyridoxamine 5'-phosphate oxidase from Roseobacter denitrificans (strain ATCC 33942 / OCh 114) (Erythrobacter sp. (strain OCh 114)).